Reading from the N-terminus, the 279-residue chain is Phosphatidylglycerol--prolipoprotein diacylglyceryl transferase (279 aa).

Transmembrane regions (helical) follow at residues 18–38 (LSVR…YFVA), 55–75 (IIFY…VIFQ), and 89–109 (IWHG…AGVI). A 1,2-diacyl-sn-glycero-3-phospho-(1'-sn-glycerol) is bound at residue R137. A run of 2 helical transmembrane segments spans residues 203–223 (LGET…FIEG) and 235–255 (IRVA…LIVY).

The protein belongs to the Lgt family.

The protein resides in the cell membrane. It catalyses the reaction L-cysteinyl-[prolipoprotein] + a 1,2-diacyl-sn-glycero-3-phospho-(1'-sn-glycerol) = an S-1,2-diacyl-sn-glyceryl-L-cysteinyl-[prolipoprotein] + sn-glycerol 1-phosphate + H(+). It functions in the pathway protein modification; lipoprotein biosynthesis (diacylglyceryl transfer). Catalyzes the transfer of the diacylglyceryl group from phosphatidylglycerol to the sulfhydryl group of the N-terminal cysteine of a prolipoprotein, the first step in the formation of mature lipoproteins. This is Phosphatidylglycerol--prolipoprotein diacylglyceryl transferase from Staphylococcus aureus (strain MSSA476).